The chain runs to 213 residues: Ferric nitrobindin-like protein (213 aa).

A disordered region spans residues 17-42 (VNLAAEQSKSTSDKNLPEFGDMPIPD). The GXWXGXG signature appears at 65 to 71 (GVWRGQG).

Belongs to the nitrobindin family.

The protein is Ferric nitrobindin-like protein of Corynebacterium jeikeium (strain K411).